The primary structure comprises 176 residues: MLRVLPTSFKSISTRSAFRACQLSPLTVYCPLKSSQGTDIKSLEDLTKLKSLEGVDPELIRKLINERTIELNVQNELEMLKNLNKQEKMSQEVSLKRFVRPLWVFFLMSSTVYLILHYVWWKLEVVEKEKELQSHVESLEMELDQTLKSQNQNVSSSQNNGNNKTNDKPWYRKWFF.

The N-terminal 28 residues, 1-28 (MLRVLPTSFKSISTRSAFRACQLSPLTV), are a transit peptide targeting the mitochondrion. Residues 29-98 (YCPLKSSQGT…MSQEVSLKRF (70 aa)) are Mitochondrial matrix-facing. The chain crosses the membrane as a helical span at residues 99-121 (VRPLWVFFLMSSTVYLILHYVWW). The Mitochondrial intermembrane portion of the chain corresponds to 122–176 (KLEVVEKEKELQSHVESLEMELDQTLKSQNQNVSSSQNNGNNKTNDKPWYRKWFF). Residues 123–151 (LEVVEKEKELQSHVESLEMELDQTLKSQN) are a coiled coil. Residues 149 to 163 (SQNQNVSSSQNNGNN) show a composition bias toward low complexity. Positions 149-168 (SQNQNVSSSQNNGNNKTNDK) are disordered.

It belongs to the INA17 family. Component of the inner membrane assembly (INA) complex, composed of INA17 and INA22. Interacts with a subset of F(1)F(0)-ATP synthase subunits of the F(1)-domain and the peripheral stalk.

It localises to the mitochondrion inner membrane. Its function is as follows. Component of the INA complex (INAC) that promotes the biogenesis of mitochondrial F(1)F(0)-ATP synthase. INAC facilitates the assembly of the peripheral stalk and promotes the assembly of the catalytic F(1)-domain with the membrane-embedded F(0)-domain. The polypeptide is Inner membrane assembly complex subunit 17 (Zygosaccharomyces rouxii (strain ATCC 2623 / CBS 732 / NBRC 1130 / NCYC 568 / NRRL Y-229)).